The sequence spans 469 residues: Putative diacyglycerol O-acyltransferase MT0231 (469 aa).

His139 functions as the Proton acceptor in the catalytic mechanism.

The protein belongs to the long-chain O-acyltransferase family.

The catalysed reaction is an acyl-CoA + a 1,2-diacyl-sn-glycerol = a triacyl-sn-glycerol + CoA. It participates in glycerolipid metabolism; triacylglycerol biosynthesis. This chain is Putative diacyglycerol O-acyltransferase MT0231, found in Mycobacterium tuberculosis (strain CDC 1551 / Oshkosh).